The primary structure comprises 389 residues: Carbamoyl phosphate synthase small chain (389 aa).

The tract at residues M1–D197 is CPSase. The L-glutamine site is built by S51, G249, and G251. The Glutamine amidotransferase type-1 domain occupies H201 to V387. The Nucleophile role is filled by C276. L277, Q280, N318, G320, and F321 together coordinate L-glutamine. Residues H360 and E362 contribute to the active site.

This sequence belongs to the CarA family. In terms of assembly, composed of two chains; the small (or glutamine) chain promotes the hydrolysis of glutamine to ammonia, which is used by the large (or ammonia) chain to synthesize carbamoyl phosphate. Tetramer of heterodimers (alpha,beta)4.

The enzyme catalyses hydrogencarbonate + L-glutamine + 2 ATP + H2O = carbamoyl phosphate + L-glutamate + 2 ADP + phosphate + 2 H(+). The catalysed reaction is L-glutamine + H2O = L-glutamate + NH4(+). The protein operates within amino-acid biosynthesis; L-arginine biosynthesis; carbamoyl phosphate from bicarbonate: step 1/1. Its pathway is pyrimidine metabolism; UMP biosynthesis via de novo pathway; (S)-dihydroorotate from bicarbonate: step 1/3. Its function is as follows. Small subunit of the glutamine-dependent carbamoyl phosphate synthetase (CPSase). CPSase catalyzes the formation of carbamoyl phosphate from the ammonia moiety of glutamine, carbonate, and phosphate donated by ATP, constituting the first step of 2 biosynthetic pathways, one leading to arginine and/or urea and the other to pyrimidine nucleotides. The small subunit (glutamine amidotransferase) binds and cleaves glutamine to supply the large subunit with the substrate ammonia. The polypeptide is Carbamoyl phosphate synthase small chain (Rhodopirellula baltica (strain DSM 10527 / NCIMB 13988 / SH1)).